The chain runs to 143 residues: Putative pre-16S rRNA nuclease (143 aa).

It belongs to the YqgF nuclease family.

Its subcellular location is the cytoplasm. In terms of biological role, could be a nuclease involved in processing of the 5'-end of pre-16S rRNA. The protein is Putative pre-16S rRNA nuclease of Marinobacter nauticus (strain ATCC 700491 / DSM 11845 / VT8) (Marinobacter aquaeolei).